Reading from the N-terminus, the 111-residue chain is Large ribosomal subunit protein eL33z (111 aa).

It belongs to the eukaryotic ribosomal protein eL33 family.

In Arabidopsis thaliana (Mouse-ear cress), this protein is Large ribosomal subunit protein eL33z (RPL35AB).